Reading from the N-terminus, the 366-residue chain is Phosphoserine aminotransferase (366 aa).

L-glutamate is bound at residue arginine 42. Pyridoxal 5'-phosphate is bound by residues 76–77 (AT), tryptophan 101, threonine 156, aspartate 178, and glutamine 201. An N6-(pyridoxal phosphate)lysine modification is found at lysine 202. A pyridoxal 5'-phosphate-binding site is contributed by 243 to 244 (NT).

Belongs to the class-V pyridoxal-phosphate-dependent aminotransferase family. SerC subfamily. In terms of assembly, homodimer. Requires pyridoxal 5'-phosphate as cofactor.

The protein resides in the cytoplasm. The enzyme catalyses O-phospho-L-serine + 2-oxoglutarate = 3-phosphooxypyruvate + L-glutamate. It catalyses the reaction 4-(phosphooxy)-L-threonine + 2-oxoglutarate = (R)-3-hydroxy-2-oxo-4-phosphooxybutanoate + L-glutamate. Its pathway is amino-acid biosynthesis; L-serine biosynthesis; L-serine from 3-phospho-D-glycerate: step 2/3. The protein operates within cofactor biosynthesis; pyridoxine 5'-phosphate biosynthesis; pyridoxine 5'-phosphate from D-erythrose 4-phosphate: step 3/5. Catalyzes the reversible conversion of 3-phosphohydroxypyruvate to phosphoserine and of 3-hydroxy-2-oxo-4-phosphonooxybutanoate to phosphohydroxythreonine. This chain is Phosphoserine aminotransferase, found in Aromatoleum aromaticum (strain DSM 19018 / LMG 30748 / EbN1) (Azoarcus sp. (strain EbN1)).